A 200-amino-acid polypeptide reads, in one-letter code: Probable GTP-binding protein EngB (200 aa).

One can recognise an EngB-type G domain in the interval 23–197; it reads KNSEVVFIGR…RERVLKDVLG (175 aa). Residues 31-38, 58-62, 83-86, 153-156, and 175-177 each bind GTP; these read GRSNVGKS, GKTQL, DLPG, TKMD, and FTA. Positions 38 and 60 each coordinate Mg(2+).

The protein belongs to the TRAFAC class TrmE-Era-EngA-EngB-Septin-like GTPase superfamily. EngB GTPase family. Mg(2+) is required as a cofactor.

Functionally, necessary for normal cell division and for the maintenance of normal septation. The sequence is that of Probable GTP-binding protein EngB from Wolinella succinogenes (strain ATCC 29543 / DSM 1740 / CCUG 13145 / JCM 31913 / LMG 7466 / NCTC 11488 / FDC 602W) (Vibrio succinogenes).